Consider the following 369-residue polypeptide: Deoxyhypusine synthase (369 aa).

Residues 105–109 (SNLIS), 131–133 (TAG), E137, and D238 contribute to the NAD(+) site. Position 136–137 (136–137 (EE)) interacts with spermidine. D243 lines the spermidine pocket. NAD(+) is bound at residue G283. Position 288 (H288) interacts with spermidine. Residue 308–309 (TA) coordinates NAD(+). Spermidine contacts are provided by residues 314 to 316 (GSD) and 323 to 329 (EAVSWGK). K329 functions as the Nucleophile in the catalytic mechanism. 342–343 (DA) contacts NAD(+).

The protein belongs to the deoxyhypusine synthase family. NAD(+) is required as a cofactor.

The catalysed reaction is [eIF5A protein]-L-lysine + spermidine = [eIF5A protein]-deoxyhypusine + propane-1,3-diamine. Its pathway is protein modification; eIF5A hypusination. Catalyzes the NAD-dependent oxidative cleavage of spermidine and the subsequent transfer of the butylamine moiety of spermidine to the epsilon-amino group of a critical lysine residue of the eIF-5A precursor protein to form the intermediate deoxyhypusine residue. This is the first step of the post-translational modification of that lysine into an unusual amino acid residue named hypusine. Hypusination is unique to mature eIF-5A factor and is essential for its function. This chain is Deoxyhypusine synthase (Dhps), found in Mus musculus (Mouse).